The primary structure comprises 761 residues: Phosphoribosylformylglycinamidine synthase subunit PurL (761 aa).

Histidine 49 is a catalytic residue. 2 residues coordinate ATP: tyrosine 52 and lysine 92. A Mg(2+)-binding site is contributed by glutamate 94. Residues 95–98 and arginine 117 contribute to the substrate site; that span reads SHNH. Histidine 96 (proton acceptor) is an active-site residue. Aspartate 118 is a Mg(2+) binding site. Position 241 (glutamine 241) interacts with substrate. Aspartate 269 contacts Mg(2+). 318–320 is a substrate binding site; the sequence is ESQ. Positions 502 and 539 each coordinate ATP. Asparagine 540 is a binding site for Mg(2+). Serine 542 is a substrate binding site.

It belongs to the FGAMS family. In terms of assembly, monomer. Part of the FGAM synthase complex composed of 1 PurL, 1 PurQ and 2 PurS subunits.

It is found in the cytoplasm. It catalyses the reaction N(2)-formyl-N(1)-(5-phospho-beta-D-ribosyl)glycinamide + L-glutamine + ATP + H2O = 2-formamido-N(1)-(5-O-phospho-beta-D-ribosyl)acetamidine + L-glutamate + ADP + phosphate + H(+). It functions in the pathway purine metabolism; IMP biosynthesis via de novo pathway; 5-amino-1-(5-phospho-D-ribosyl)imidazole from N(2)-formyl-N(1)-(5-phospho-D-ribosyl)glycinamide: step 1/2. Its function is as follows. Part of the phosphoribosylformylglycinamidine synthase complex involved in the purines biosynthetic pathway. Catalyzes the ATP-dependent conversion of formylglycinamide ribonucleotide (FGAR) and glutamine to yield formylglycinamidine ribonucleotide (FGAM) and glutamate. The FGAM synthase complex is composed of three subunits. PurQ produces an ammonia molecule by converting glutamine to glutamate. PurL transfers the ammonia molecule to FGAR to form FGAM in an ATP-dependent manner. PurS interacts with PurQ and PurL and is thought to assist in the transfer of the ammonia molecule from PurQ to PurL. This chain is Phosphoribosylformylglycinamidine synthase subunit PurL, found in Chlorobium luteolum (strain DSM 273 / BCRC 81028 / 2530) (Pelodictyon luteolum).